The following is a 400-amino-acid chain: Probable RNA polymerase sigma factor RfaY (400 aa).

The Polymerase core binding motif lies at 62 to 75 (WQRLAQLHQPASFL). Positions 165–184 (SDAAVRKRLSRARATVRNEL) form a DNA-binding region, H-T-H motif.

It belongs to the sigma-70 factor family. ECF subfamily.

In terms of biological role, sigma factors are initiation factors that promote the attachment of RNA polymerase to specific initiation sites and are then released. This sigma factor is involved in lipopolysaccharide biosynthesis and pathogenicity. This is Probable RNA polymerase sigma factor RfaY (rfaY) from Xanthomonas campestris pv. campestris (strain ATCC 33913 / DSM 3586 / NCPPB 528 / LMG 568 / P 25).